The chain runs to 252 residues: uncharacterized protein (252 aa).

28-35 contacts ATP; it reads GCDGTGKS.

This sequence to E.coli YghS and YghT.

This is an uncharacterized protein from Escherichia coli O6:H1 (strain CFT073 / ATCC 700928 / UPEC).